Here is a 305-residue protein sequence, read N- to C-terminus: Glutaminase (305 aa).

S61, N113, E158, N165, Y189, Y241, and V259 together coordinate substrate.

Belongs to the glutaminase family. As to quaternary structure, homotetramer.

The catalysed reaction is L-glutamine + H2O = L-glutamate + NH4(+). The protein is Glutaminase of Alkaliphilus oremlandii (strain OhILAs) (Clostridium oremlandii (strain OhILAs)).